A 150-amino-acid chain; its full sequence is Ribonuclease K6 (150 aa).

The N-terminal stretch at 1–23 is a signal peptide; sequence MVLCFPLLLLLLVLWGPVCLLHA. The Proton acceptor role is filled by His38. 4 disulfides stabilise this stretch: Cys46–Cys104, Cys60–Cys114, Cys78–Cys129, and Cys85–Cys92. Asn55 carries N-linked (GlcNAc...) asparagine glycosylation. Substrate is bound by residues 61–65 and Lys86; that span reads KHQNT. Asn100 carries N-linked (GlcNAc...) asparagine glycosylation. Arg105 contributes to the substrate binding site. The active-site Proton donor is His145.

This sequence belongs to the pancreatic ribonuclease family. Interacts (via N-terminus) with bacterial lipopolysaccharide (LPS).

Its subcellular location is the secreted. It localises to the lysosome. The protein localises to the cytoplasmic granule. In terms of biological role, ribonuclease which shows a preference for the pyrimidines uridine and cytosine. Has potent antibacterial activity against a range of Gram-positive and Gram-negative bacteria, including P.aeruginosa, A.baumanii, M.luteus, S.aureus, E.faecalis, E.faecium, S.saprophyticus and E.coli. Causes loss of bacterial membrane integrity, and also promotes agglutination of Gram-negative bacteria. Probably contributes to urinary tract sterility. Bactericidal activity is independent of RNase activity. The polypeptide is Ribonuclease K6 (RNASE6) (Macaca mulatta (Rhesus macaque)).